The primary structure comprises 696 residues: Elongation factor G 2 (696 aa).

The tr-type G domain occupies 5-281 (SKYRNIGIFA…AVVDYLPSPT (277 aa)). GTP is bound by residues 14–21 (AHVDAGKT), 78–82 (DTPGH), and 132–135 (NKLD).

The protein belongs to the TRAFAC class translation factor GTPase superfamily. Classic translation factor GTPase family. EF-G/EF-2 subfamily.

Its subcellular location is the cytoplasm. Its function is as follows. Catalyzes the GTP-dependent ribosomal translocation step during translation elongation. During this step, the ribosome changes from the pre-translocational (PRE) to the post-translocational (POST) state as the newly formed A-site-bound peptidyl-tRNA and P-site-bound deacylated tRNA move to the P and E sites, respectively. Catalyzes the coordinated movement of the two tRNA molecules, the mRNA and conformational changes in the ribosome. This is Elongation factor G 2 from Vibrio parahaemolyticus serotype O3:K6 (strain RIMD 2210633).